The sequence spans 389 residues: Nicotinate phosphoribosyltransferase (389 aa).

Position 211 is a phosphohistidine; by autocatalysis (histidine 211).

It belongs to the NAPRTase family. Transiently phosphorylated on a His residue during the reaction cycle. Phosphorylation strongly increases the affinity for substrates and increases the rate of nicotinate D-ribonucleotide production. Dephosphorylation regenerates the low-affinity form of the enzyme, leading to product release.

The catalysed reaction is nicotinate + 5-phospho-alpha-D-ribose 1-diphosphate + ATP + H2O = nicotinate beta-D-ribonucleotide + ADP + phosphate + diphosphate. Its pathway is cofactor biosynthesis; NAD(+) biosynthesis; nicotinate D-ribonucleotide from nicotinate: step 1/1. In terms of biological role, catalyzes the synthesis of beta-nicotinate D-ribonucleotide from nicotinate and 5-phospho-D-ribose 1-phosphate at the expense of ATP. This chain is Nicotinate phosphoribosyltransferase, found in Desulforapulum autotrophicum (strain ATCC 43914 / DSM 3382 / VKM B-1955 / HRM2) (Desulfobacterium autotrophicum).